The sequence spans 64 residues: Large ribosomal subunit protein uL29 (64 aa).

Belongs to the universal ribosomal protein uL29 family.

The polypeptide is Large ribosomal subunit protein uL29 (Nitrosomonas europaea (strain ATCC 19718 / CIP 103999 / KCTC 2705 / NBRC 14298)).